Reading from the N-terminus, the 519-residue chain is Steroid 17-alpha-hydroxylase/17,20 lyase (519 aa).

Cys-455 serves as a coordination point for heme.

The protein belongs to the cytochrome P450 family. It depends on heme as a cofactor.

Its subcellular location is the membrane. It catalyses the reaction a C21-steroid + reduced [NADPH--hemoprotein reductase] + O2 = a 17alpha-hydroxy-C21-steroid + oxidized [NADPH--hemoprotein reductase] + H2O + H(+). The catalysed reaction is 17alpha-hydroxyprogesterone + reduced [NADPH--hemoprotein reductase] + O2 = androst-4-ene-3,17-dione + acetate + oxidized [NADPH--hemoprotein reductase] + H2O + 2 H(+). The enzyme catalyses 17alpha-hydroxypregnenolone + reduced [NADPH--hemoprotein reductase] + O2 = 3beta-hydroxyandrost-5-en-17-one + acetate + oxidized [NADPH--hemoprotein reductase] + H2O + 2 H(+). The protein operates within lipid metabolism; steroid biosynthesis. In terms of biological role, conversion of pregnenolone and progesterone to their 17-alpha-hydroxylated products and subsequently to dehydroepiandrosterone (DHEA) and androstenedione. Catalyzes both the 17-alpha-hydroxylation and the 17,20-lyase reaction. The chain is Steroid 17-alpha-hydroxylase/17,20 lyase (CYP17A1) from Rana dybowskii (Dybovsky's frog).